The sequence spans 293 residues: Phycoerythrin class 2 subunit gamma, linker polypeptide (293 aa).

Residue cysteine 49 participates in phycourobilin binding. Positions 50–229 (AAMGIGIGPR…LGGMKVAISD (180 aa)) constitute a PBS-linker domain.

Contains one covalently linked phycourobilin chromophore.

The protein resides in the cellular thylakoid membrane. Functionally, this protein is a bile pigment-bearing rod linker polypeptide that associates with C-phycoerythrin. The polypeptide is Phycoerythrin class 2 subunit gamma, linker polypeptide (mpeC) (Synechococcus sp. (strain WH8020)).